We begin with the raw amino-acid sequence, 352 residues long: Selenide, water dikinase (352 aa).

C23 is an active-site residue. ATP-binding positions include K26 and 54–56; that span reads SRD. D57 serves as a coordination point for Mg(2+). Residues D74, D97, and 145-147 each bind ATP; that span reads GHS. D97 is a binding site for Mg(2+). Residue D233 participates in Mg(2+) binding.

This sequence belongs to the selenophosphate synthase 1 family. Class I subfamily. Homodimer. Mg(2+) serves as cofactor.

It catalyses the reaction hydrogenselenide + ATP + H2O = selenophosphate + AMP + phosphate + 2 H(+). Synthesizes selenophosphate from selenide and ATP. The protein is Selenide, water dikinase of Shewanella sp. (strain ANA-3).